The chain runs to 20 residues: Brevinin-1SPd (20 aa).

Cys14 and Cys20 are joined by a disulfide.

Expressed by the skin glands.

The protein localises to the secreted. Functionally, antimicrobial peptide with activity against Gram-negative and Gram-positive bacteria (MIC=13 uM against E.coli, MIC=3 uM against S.aureus) and fungi (MIC=3 uM against C.albicans). Shows hemolytic activity on human erythrocytes (HC(50)=8 uM). The polypeptide is Brevinin-1SPd (Lithobates septentrionalis (Mink frog)).